Here is a 95-residue protein sequence, read N- to C-terminus: YcgL domain-containing protein APJL_0712 (95 aa).

Residues 4–88 form the YcgL domain; sequence HLCAIYKSPK…PPENLLKTFL (85 aa).

The protein is YcgL domain-containing protein APJL_0712 of Actinobacillus pleuropneumoniae serotype 3 (strain JL03).